A 336-amino-acid chain; its full sequence is Glucokinase (336 aa).

12–17 (ADIGGT) is an ATP binding site.

It belongs to the bacterial glucokinase family.

Its subcellular location is the cytoplasm. The catalysed reaction is D-glucose + ATP = D-glucose 6-phosphate + ADP + H(+). The chain is Glucokinase from Helicobacter pylori (strain P12).